Here is a 269-residue protein sequence, read N- to C-terminus: Chymotrypsin-like elastase family member 2A (269 aa).

The N-terminal stretch at 1 to 16 (MIRALLLSTLVAGALS) is a signal peptide. Positions 17–28 (CGLPANLPQLPR) are cleaved as a propeptide — activation peptide. One can recognise a Peptidase S1 domain in the interval 29 to 267 (VVGGEDARPN…YIDWINSVIA (239 aa)). Cys58 and Cys74 are oxidised to a cystine. Residues His73 and Asp121 each act as charge relay system in the active site. 3 disulfide bridges follow: Cys155–Cys222, Cys186–Cys202, and Cys212–Cys243. Ser216 functions as the Charge relay system in the catalytic mechanism.

The protein belongs to the peptidase S1 family. Elastase subfamily. In terms of assembly, interacts with CPA1. Interacts with SERPINA1. As to expression, pancreas.

The protein resides in the secreted. The catalysed reaction is Preferential cleavage: Leu-|-Xaa, Met-|-Xaa and Phe-|-Xaa. Hydrolyzes elastin.. Elastase that enhances insulin signaling and might have a physiologic role in cellular glucose metabolism. Circulates in plasma and reduces platelet hyperactivation, triggers both insulin secretion and degradation, and increases insulin sensitivity. The protein is Chymotrypsin-like elastase family member 2A (CELA2A) of Sus scrofa (Pig).